We begin with the raw amino-acid sequence, 371 residues long: N-acetyldiaminopimelate deacetylase (371 aa).

Residue D68 is part of the active site. Residue E127 is the Proton acceptor of the active site.

It belongs to the peptidase M20A family. N-acetyldiaminopimelate deacetylase subfamily.

It catalyses the reaction N-acetyl-(2S,6S)-2,6-diaminopimelate + H2O = (2S,6S)-2,6-diaminopimelate + acetate. Its pathway is amino-acid biosynthesis; L-lysine biosynthesis via DAP pathway; LL-2,6-diaminopimelate from (S)-tetrahydrodipicolinate (acetylase route): step 3/3. In terms of biological role, catalyzes the conversion of N-acetyl-diaminopimelate to diaminopimelate and acetate. The sequence is that of N-acetyldiaminopimelate deacetylase from Listeria monocytogenes serotype 4a (strain HCC23).